We begin with the raw amino-acid sequence, 71 residues long: uncharacterized protein (71 aa).

The chain crosses the membrane as a helical span at residues 12-34; that stretch reads GYLSLTLVTLPVCSSLHCYFLWT.

The protein localises to the membrane. This is an uncharacterized protein from Dictyostelium discoideum (Social amoeba).